A 124-amino-acid chain; its full sequence is Secreted RxLR effector protein 49 (124 aa).

An N-terminal signal peptide occupies residues Met1 to Ala22. The short motif at Arg57–Arg60 is the RxLR element.

It belongs to the RxLR effector family.

It is found in the secreted. The protein localises to the host cytoplasm. It localises to the host nucleus. In terms of biological role, effector that acts as a broad suppressor of cell death to interrupt plant immunity. Inhibits cell death induced by cell death-inducing proteins, including the PAMP elicitor INF1 from P.infestans. The sequence is that of Secreted RxLR effector protein 49 from Plasmopara viticola (Downy mildew of grapevine).